The primary structure comprises 165 residues: Phosphopantetheine adenylyltransferase (165 aa).

Residue T11 coordinates substrate. Residues 11–12 and H19 each bind ATP; that span reads TF. Substrate contacts are provided by K43, V75, and R89. ATP contacts are provided by residues 90–92, E100, and 125–131; these read GLR and YQFISST.

This sequence belongs to the bacterial CoaD family. As to quaternary structure, homohexamer. Requires Mg(2+) as cofactor.

It localises to the cytoplasm. The enzyme catalyses (R)-4'-phosphopantetheine + ATP + H(+) = 3'-dephospho-CoA + diphosphate. It participates in cofactor biosynthesis; coenzyme A biosynthesis; CoA from (R)-pantothenate: step 4/5. In terms of biological role, reversibly transfers an adenylyl group from ATP to 4'-phosphopantetheine, yielding dephospho-CoA (dPCoA) and pyrophosphate. The protein is Phosphopantetheine adenylyltransferase of Acidovorax ebreus (strain TPSY) (Diaphorobacter sp. (strain TPSY)).